Reading from the N-terminus, the 257-residue chain is Leucine-rich repeat-containing protein 3 (257 aa).

Positions 1 to 32 (MGPRGRQSPSSPLAPSQGSCFFILFCLRLGAS) are cleaved as a signal peptide. One can recognise an LRRNT domain in the interval 33–64 (CPQSCQCPDHAGAVAVHCSSRGLQEIPRDIPA). 3 LRR repeats span residues 65 to 86 (NTVLLKLDANRISRVPNGAFQH), 89 to 110 (QLRELDLSHNAIEAIGPAAFSG), and 114 to 135 (GLRLLDLSHNRIRRIPKDALGK). The LRRCT domain maps to 145 to 198 (NPLHCECALQEALWELKLDPDSVDEIACHTSAQEQFVGKPLIQVLDSGASFCST). Residues 205–225 (VAMLVTMFGWFTMVIAYVVYY) form a helical membrane-spanning segment.

Belongs to the LRRC3 family.

It localises to the membrane. This chain is Leucine-rich repeat-containing protein 3 (Lrrc3), found in Rattus norvegicus (Rat).